A 254-amino-acid chain; its full sequence is Protein CbbY, plasmid (254 aa).

Belongs to the HAD-like hydrolase superfamily. CbbY/CbbZ/Gph/YieH family.

This is Protein CbbY, plasmid (cbbYP) from Cupriavidus necator (strain ATCC 17699 / DSM 428 / KCTC 22496 / NCIMB 10442 / H16 / Stanier 337) (Ralstonia eutropha).